The primary structure comprises 413 residues: Ureide permease 5 (413 aa).

Over 1–18 (MMIAQELGIYVVESKGGA) the chain is Extracellular. The chain crosses the membrane as a helical span at residues 19-39 (ILCLLLSLLCLGTWPALMALL). The Cytoplasmic segment spans residues 40-50 (ERRGRLPQHTY). A helical transmembrane segment spans residues 51 to 71 (LDYSITNFLAAIFIAFVFGGI). Residues 72–91 (GESTHEAPSFITQLTQIQDN) are Extracellular-facing. A helical transmembrane segment spans residues 92–112 (WPSVLFAMAGGVGLSIGNLAT). At 113–115 (QYS) the chain is on the cytoplasmic side. A helical transmembrane segment spans residues 116–136 (LAFVGLSVTEVTAASITVVVG). Residues 137–149 (TTVNYFLDNGLNR) are Extracellular-facing. A helical membrane pass occupies residues 150–170 (ADILFSGVGCFMVAVCLGSAV). Residues 171–240 (HSSNSADIKA…RAIKVLGKSM (70 aa)) are Cytoplasmic-facing. ATP is bound at residue 232–239 (AIKVLGKS). A helical membrane pass occupies residues 241 to 261 (VVGLGITFFAGLSFSLFSPLF). At 262–278 (NLATNDQWHTLKQGVPK) the chain is on the extracellular side. Residues 279–299 (LIVYTAFFYFSLSCFVIAVAL) form a helical membrane-spanning segment. Over 300–326 (NISFLYKPVLDSPRSSFREYLSDWNGR) the chain is Cytoplasmic. Residues 327–347 (GWALAAGLLCGFGNGLQFMGG) traverse the membrane as a helical segment. Residues 348–352 (QAAGY) lie on the Extracellular side of the membrane. A helical transmembrane segment spans residues 353 to 373 (AASDAVQALPLVSTFWGIYLF). Over 374-384 (GEYRRSSTRTY) the chain is Cytoplasmic. Residues 385–405 (ALLVGMLVMFTVAVGLLMASA) form a helical membrane-spanning segment. At 406 to 413 (GERETRFT) the chain is on the extracellular side.

Belongs to the plant ureide permease (TC 2.A.7.19) family. As to expression, expressed in lateral roots, rosette leaves, stems, stipules, flower stigma, pedicels and the connective tissue between pollen sacks.

It is found in the membrane. Proton-coupled transporter that transports a wide spectrum of oxo derivatives of heterocyclic nitrogen compounds, including allantoin, uric acid and xanthine, but not adenine. Mediates transport of uracil and 5-fluorouracil (a toxic uracil analog). In terms of biological role, proton-coupled transporter that transports a wide spectrum of oxo derivatives of heterocyclic nitrogen compounds, including allantoin, xanthine and uracil. This Arabidopsis thaliana (Mouse-ear cress) protein is Ureide permease 5.